Consider the following 488-residue polypeptide: Bifunctional protein GlmU (488 aa).

The pyrophosphorylase stretch occupies residues 1–237; it reads MPRTRTPLAA…VEEASGVNDR (237 aa). Residues 13–16, K27, Q82, 87–88, 110–112, G149, E164, N179, and N235 each bind UDP-N-acetyl-alpha-D-glucosamine; these read LAAG, GT, and SGD. Residue D112 participates in Mg(2+) binding. N235 is a binding site for Mg(2+). Positions 238–258 are linker; the sequence is VELSRANRVMVGRLAEAFMRA. The interval 259–488 is N-acetyltransferase; the sequence is GVTIEDPARF…KGRPAARRAS (230 aa). UDP-N-acetyl-alpha-D-glucosamine contacts are provided by R341 and K359. Catalysis depends on H371, which acts as the Proton acceptor. 2 residues coordinate UDP-N-acetyl-alpha-D-glucosamine: Y374 and N385. Acetyl-CoA-binding positions include A388, 394–395, S413, A431, and R448; that span reads NY. Positions 459–488 are disordered; it reads AQRQAEKQMKGTATGPASARKGRPAARRAS. Residues 478–488 show a composition bias toward basic residues; it reads RKGRPAARRAS.

The protein in the N-terminal section; belongs to the N-acetylglucosamine-1-phosphate uridyltransferase family. This sequence in the C-terminal section; belongs to the transferase hexapeptide repeat family. In terms of assembly, homotrimer. Requires Mg(2+) as cofactor.

Its subcellular location is the cytoplasm. The enzyme catalyses alpha-D-glucosamine 1-phosphate + acetyl-CoA = N-acetyl-alpha-D-glucosamine 1-phosphate + CoA + H(+). The catalysed reaction is N-acetyl-alpha-D-glucosamine 1-phosphate + UTP + H(+) = UDP-N-acetyl-alpha-D-glucosamine + diphosphate. It participates in nucleotide-sugar biosynthesis; UDP-N-acetyl-alpha-D-glucosamine biosynthesis; N-acetyl-alpha-D-glucosamine 1-phosphate from alpha-D-glucosamine 6-phosphate (route II): step 2/2. Its pathway is nucleotide-sugar biosynthesis; UDP-N-acetyl-alpha-D-glucosamine biosynthesis; UDP-N-acetyl-alpha-D-glucosamine from N-acetyl-alpha-D-glucosamine 1-phosphate: step 1/1. The protein operates within bacterial outer membrane biogenesis; LPS lipid A biosynthesis. Its function is as follows. Catalyzes the last two sequential reactions in the de novo biosynthetic pathway for UDP-N-acetylglucosamine (UDP-GlcNAc). The C-terminal domain catalyzes the transfer of acetyl group from acetyl coenzyme A to glucosamine-1-phosphate (GlcN-1-P) to produce N-acetylglucosamine-1-phosphate (GlcNAc-1-P), which is converted into UDP-GlcNAc by the transfer of uridine 5-monophosphate (from uridine 5-triphosphate), a reaction catalyzed by the N-terminal domain. This chain is Bifunctional protein GlmU, found in Anaeromyxobacter sp. (strain K).